Reading from the N-terminus, the 252-residue chain is Agamous-like MADS-box protein AGL6 (252 aa).

In terms of domain architecture, MADS-box spans 3–57 (RGRVEMKRIENKINRQVTFSKRRNGLLKKAYELSVLCDAEVALIIFSSRGKLYEF). Positions 86–176 (TQSWCQEVTK…KIKFETEGHA (91 aa)) constitute a K-box domain. Residues 91–173 (QEVTKLKSKY…KQLKIKFETE (83 aa)) adopt a coiled-coil conformation.

Forms a heterodimer with AGAMOUS. Interacts with AGL15 and AGL16. Preferentially expressed in flowers.

Its subcellular location is the nucleus. Probable transcription factor. Forms a heterodimer via the K-box domain with AG, that could be involved in genes regulation during floral meristem development. The protein is Agamous-like MADS-box protein AGL6 (AGL6) of Arabidopsis thaliana (Mouse-ear cress).